Here is a 393-residue protein sequence, read N- to C-terminus: Formate-dependent phosphoribosylglycinamide formyltransferase (393 aa).

Residues glutamate 22–leucine 23 and glutamate 82 each bind N(1)-(5-phospho-beta-D-ribosyl)glycinamide. Residues arginine 114, lysine 155, serine 160 to glutamine 165, glutamate 195 to valine 198, and glutamate 203 contribute to the ATP site. Positions arginine 119–threonine 308 constitute an ATP-grasp domain. The Mg(2+) site is built by glutamate 267 and glutamate 279. N(1)-(5-phospho-beta-D-ribosyl)glycinamide-binding positions include aspartate 286, lysine 356, and arginine 363 to arginine 364.

This sequence belongs to the PurK/PurT family. Homodimer.

The enzyme catalyses N(1)-(5-phospho-beta-D-ribosyl)glycinamide + formate + ATP = N(2)-formyl-N(1)-(5-phospho-beta-D-ribosyl)glycinamide + ADP + phosphate + H(+). The protein operates within purine metabolism; IMP biosynthesis via de novo pathway; N(2)-formyl-N(1)-(5-phospho-D-ribosyl)glycinamide from N(1)-(5-phospho-D-ribosyl)glycinamide (formate route): step 1/1. Its function is as follows. Involved in the de novo purine biosynthesis. Catalyzes the transfer of formate to 5-phospho-ribosyl-glycinamide (GAR), producing 5-phospho-ribosyl-N-formylglycinamide (FGAR). Formate is provided by PurU via hydrolysis of 10-formyl-tetrahydrofolate. The polypeptide is Formate-dependent phosphoribosylglycinamide formyltransferase (Vibrio cholerae serotype O1 (strain M66-2)).